A 677-amino-acid chain; its full sequence is WD repeat-containing protein 43 (677 aa).

WD repeat units follow at residues 11–51 (PLAP…LHQE), 57–119 (HLSG…LHSK), 124–163 (GHDN…VKCK), 166–205 (GDNS…RHFT), 207–259 (HATP…KEKS), and 267–309 (TDEP…YCKK). S77 is modified (phosphoserine). K309 is covalently cross-linked (Glycyl lysine isopeptide (Lys-Gly) (interchain with G-Cter in SUMO1); alternate). K309 is covalently cross-linked (Glycyl lysine isopeptide (Lys-Gly) (interchain with G-Cter in SUMO2); alternate). The residue at position 321 (T321) is a Phosphothreonine. A Glycyl lysine isopeptide (Lys-Gly) (interchain with G-Cter in SUMO1); alternate cross-link involves residue K384. K384 participates in a covalent cross-link: Glycyl lysine isopeptide (Lys-Gly) (interchain with G-Cter in SUMO2); alternate. Residue T394 is modified to Phosphothreonine. S399, S431, S437, and S590 each carry phosphoserine. 2 disordered regions span residues 414-445 (AIKP…LGAM) and 582-677 (SEKT…SEEE). Residues 582-592 (SEKTKGATSPG) are compositionally biased toward polar residues. A compositionally biased stretch (acidic residues) spans 600 to 652 (EEESSEEESDDEIADKDSEDNWDEDEEESESEKDEDVEEEDEDAEGKDEENGE). Positions 653 to 663 (DRDTASEKELN) are enriched in basic and acidic residues. Position 656 is a phosphothreonine (T656). S658 is modified (phosphoserine). Acidic residues predominate over residues 664–677 (GDSDLDPENESEEE).

The protein belongs to the UTP5 family. In terms of assembly, part of the small subunit (SSU) processome, composed of more than 70 proteins and the RNA chaperone small nucleolar RNA (snoRNA) U3. May be a component of the proposed t-UTP subcomplex of the ribosomal small subunit (SSU) processome containing at least UTP4, WDR43, HEATR1, UTP15, WDR75. Binds to RNA; binding is required for its chromatin association. Interacts with CDK9, DDX21 and SUPT6H. Interacts with RNA polymerase II. Interacts directly with UTP4 and UTP15.

It is found in the nucleus. Its subcellular location is the nucleolus. The protein localises to the nucleolus fibrillar center. The protein resides in the nucleoplasm. Ribosome biogenesis factor that coordinates hyperactive transcription and ribogenesis. Part of the small subunit (SSU) processome, first precursor of the small eukaryotic ribosomal subunit. During the assembly of the SSU processome in the nucleolus, many ribosome biogenesis factors, an RNA chaperone and ribosomal proteins associate with the nascent pre-rRNA and work in concert to generate RNA folding, modifications, rearrangements and cleavage as well as targeted degradation of pre-ribosomal RNA by the RNA exosome. Involved in nucleolar processing of pre-18S ribosomal RNA. Required for optimal pre-ribosomal RNA transcription by RNA polymerase I. Essential for stem cell pluripotency and embryonic development. In the nucleoplasm, recruited by promoter-associated/nascent transcripts and transcription to active promoters where it facilitates releases of elongation factor P-TEFb and paused RNA polymerase II to allow transcription elongation and maintain high-level expression of its targets genes. The chain is WD repeat-containing protein 43 from Homo sapiens (Human).